The sequence spans 153 residues: uncharacterized protein (153 aa).

The disordered stretch occupies residues 16–40 (DEQTPLLNNDGIQRTPPSAEADMSL). Over residues 20-31 (PLLNNDGIQRTP) the composition is skewed to polar residues.

This is an uncharacterized protein from Schizosaccharomyces pombe (strain 972 / ATCC 24843) (Fission yeast).